An 852-amino-acid polypeptide reads, in one-letter code: Taste receptor type 1 member 3 (852 aa).

A signal peptide spans 1–20 (MLGPAVLGLSLWALLQPGAG). At 21–570 (APLCLSQQLR…FLAWGEPAVL (550 aa)) the chain is on the extracellular side. Asn-85, Asn-130, Asn-264, Asn-285, Asn-380, Asn-411, Asn-432, and Asn-475 each carry an N-linked (GlcNAc...) asparagine glycan. A helical membrane pass occupies residues 571–591 (LLLLLLSLALGLVLAALGLFV). At 592 to 603 (HHRDSPLVQASG) the chain is on the cytoplasmic side. A helical transmembrane segment spans residues 604–624 (GPLACFGLVCLGLVCLSVLLF). Over 625 to 639 (PGQPSPAQCLAQQPL) the chain is Extracellular. Residues 640–660 (SHLPLTGCLSTLFLQAAEIFV) traverse the membrane as a helical segment. Residues 661 to 682 (ESELPLSWADRLSGCLRGPWAW) are Cytoplasmic-facing. The chain crosses the membrane as a helical span at residues 683–703 (LVVLLAMLVEVALCTWYLVAF). The Extracellular portion of the chain corresponds to 704–729 (PPEVVTDWHMLPTEALVHCRTRSWVS). Residues 730-750 (FGLAHATNATLAFLCFLGTFL) form a helical membrane-spanning segment. The Cytoplasmic segment spans residues 751–762 (VRSQPGRYNRAR). Residues 763–783 (GLTFAMLAYFITWVSFVPLLA) traverse the membrane as a helical segment. Residues 784–791 (NVQVVLRP) lie on the Extracellular side of the membrane. A helical membrane pass occupies residues 792 to 812 (AVQMGALLLCVLGILAAFHLP). Residues 813–852 (RCYLLIRQPGLNTPEFFLGGGPGDAQGRNDGDTGNQGKHE) are Cytoplasmic-facing. Residues 833 to 852 (GPGDAQGRNDGDTGNQGKHE) are disordered. Residues 839 to 852 (GRNDGDTGNQGKHE) are compositionally biased toward basic and acidic residues.

It belongs to the G-protein coupled receptor 3 family. TAS1R subfamily. Forms homodimers or heterodimers with TAS1R1 and TAS1R2.

The protein resides in the cell membrane. In terms of biological role, putative taste receptor. TAS1R1/TAS1R3 responds to the umami taste stimulus (the taste of monosodium glutamate). TAS1R2/TAS1R3 recognizes diverse natural and synthetic sweeteners. TAS1R3 is essential for the recognition and response to the disaccharide trehalose. Sequence differences within and between species can significantly influence the selectivity and specificity of taste responses. The chain is Taste receptor type 1 member 3 (TAS1R3) from Gorilla gorilla gorilla (Western lowland gorilla).